A 628-amino-acid polypeptide reads, in one-letter code: LRR receptor kinase SERK2 (628 aa).

An N-terminal signal peptide occupies residues 1 to 31; it reads MAEARLLRRRRLCLAVPFVWVVAVAVSRVGA. LRR repeat units follow at residues 97 to 121, 123 to 144, 145 to 169, and 170 to 194; these read LKNLQYLELYSNNISGTIPNELGNL, NLVSLDLYLNNFTGFIPETLGQ, LYKLRFLRLNNNSLSGSIPKSLTNI, and TTLQVLDLSNNNLSGEVPSTGSFSL. Residues Asn109, Asn120, Asn133, Asn155, Asn168, and Asn181 are each glycosylated (N-linked (GlcNAc...) asparagine). Residues 243–263 traverse the membrane as a helical segment; it reads AIAGGVAAAAALLFAVPAIGF. A Phosphothreonine modification is found at Thr303. The Protein kinase domain maps to 306–593; it reads FSNKNILGRG…GLAERWEEWQ (288 aa). 312-320 serves as a coordination point for ATP; it reads LGRGGFGKV. Ser329 is modified (phosphoserine). Position 334 (Lys334) interacts with ATP. Thr350 is subject to Phosphothreonine. Ser356 and Ser387 each carry phosphoserine. The active-site Proton acceptor is the Asp433. Thr463, Thr466, and Thr472 each carry phosphothreonine. Ser615 is modified (phosphoserine). Thr616 is modified (phosphothreonine). Ser625 is modified (phosphoserine).

Belongs to the protein kinase superfamily. Ser/Thr protein kinase family. In terms of assembly, interacts with BRI1. Interacts with XA21, XA26/XA3 and FLS2. Autophosphorylated on serine and threonine residues. In terms of tissue distribution, expressed in flag leaves. Expressed in roots, shoot apex, leaf blades, leaf sheaths, panicles and flowers. Expressed leaves, stems, sheaths and flowers.

It localises to the cell membrane. The catalysed reaction is L-seryl-[protein] + ATP = O-phospho-L-seryl-[protein] + ADP + H(+). It catalyses the reaction L-threonyl-[protein] + ATP = O-phospho-L-threonyl-[protein] + ADP + H(+). Functionally, LRR receptor kinase involved in positive regulation of somatic embryogenesis and defense response against the rice blast fungus pathogen Magnaporthe oryzae. Involved in the positive regulation of receptor kinase-mediated immunity. Required for immunity mediated by the LRR receptor kinases XA21 and XA26/XA3 which recognize effectors from the bacterial pathogen Xanthomonas oryzae pv. oryzae (Xoo). Required for the immune response mediated by the LRR receptor kinase FLS2 which recognizes specifically the bacterial flagellin (flg22) effector. Kinase activity and direct interaction with the immune receptors is critical for their function. Involved in the regulation of plant growth through the brassinosteroid (BR) signaling pathway. The polypeptide is LRR receptor kinase SERK2 (Oryza sativa subsp. japonica (Rice)).